A 565-amino-acid polypeptide reads, in one-letter code: CTP synthase (565 aa).

Positions 1–272 (MARPKNVKHI…DKRVLKKLGI (272 aa)) are amidoligase domain. Ser-18 is a CTP binding site. Ser-18 provides a ligand contact to UTP. 19–24 (SLGKGI) is a binding site for ATP. Tyr-59 is a binding site for L-glutamine. Asp-76 contributes to the ATP binding site. 2 residues coordinate Mg(2+): Asp-76 and Glu-146. CTP-binding positions include 153–155 (DIE), 193–198 (KTKPTQ), and Lys-229. Residues 193-198 (KTKPTQ) and Lys-229 each bind UTP. Residues 299-543 (TIAVCGKYTE…VAAAKAFAFG (245 aa)) enclose the Glutamine amidotransferase type-1 domain. Gly-363 provides a ligand contact to L-glutamine. The Nucleophile; for glutamine hydrolysis role is filled by Cys-390. L-glutamine contacts are provided by residues 391–394 (LGMQ), Glu-414, and Arg-471. Catalysis depends on residues His-516 and Glu-518.

The protein belongs to the CTP synthase family. Homotetramer.

It catalyses the reaction UTP + L-glutamine + ATP + H2O = CTP + L-glutamate + ADP + phosphate + 2 H(+). It carries out the reaction L-glutamine + H2O = L-glutamate + NH4(+). The enzyme catalyses UTP + NH4(+) + ATP = CTP + ADP + phosphate + 2 H(+). It participates in pyrimidine metabolism; CTP biosynthesis via de novo pathway; CTP from UDP: step 2/2. Allosterically activated by GTP, when glutamine is the substrate; GTP has no effect on the reaction when ammonia is the substrate. The allosteric effector GTP functions by stabilizing the protein conformation that binds the tetrahedral intermediate(s) formed during glutamine hydrolysis. Inhibited by the product CTP, via allosteric rather than competitive inhibition. Functionally, catalyzes the ATP-dependent amination of UTP to CTP with either L-glutamine or ammonia as the source of nitrogen. Regulates intracellular CTP levels through interactions with the four ribonucleotide triphosphates. This chain is CTP synthase, found in Chlorobium phaeobacteroides (strain BS1).